Here is a 327-residue protein sequence, read N- to C-terminus: Peroxidase 15 (327 aa).

An N-terminal signal peptide occupies residues Met-1 to Ala-23. Gln-24 carries the pyrrolidone carboxylic acid modification. 4 cysteine pairs are disulfide-bonded: Cys-34–Cys-115, Cys-67–Cys-72, Cys-121–Cys-323, and Cys-200–Cys-232. Asn-36 carries an N-linked (GlcNAc...) asparagine glycan. Catalysis depends on His-65, which acts as the Proton acceptor. Residues Asp-66, Val-69, Gly-71, Asp-73, and Ser-75 each contribute to the Ca(2+) site. N-linked (GlcNAc...) asparagine glycans are attached at residues Asn-81, Asn-96, and Asn-159. Pro-163 provides a ligand contact to substrate. Residues Asn-168 and Asn-171 are each glycosylated (N-linked (GlcNAc...) asparagine). His-193 is a binding site for heme b. Thr-194 contributes to the Ca(2+) binding site. Asn-209 and Asn-221 each carry an N-linked (GlcNAc...) asparagine glycan. Residues Asp-245, Thr-248, and Asp-253 each coordinate Ca(2+). N-linked (GlcNAc...) asparagine glycosylation is found at Asn-287 and Asn-291.

It belongs to the peroxidase family. Classical plant (class III) peroxidase subfamily. It depends on Ca(2+) as a cofactor. The cofactor is heme b.

The protein localises to the secreted. It carries out the reaction 2 a phenolic donor + H2O2 = 2 a phenolic radical donor + 2 H2O. Functionally, removal of H(2)O(2), oxidation of toxic reductants, biosynthesis and degradation of lignin, suberization, auxin catabolism, response to environmental stresses such as wounding, pathogen attack and oxidative stress. These functions might be dependent on each isozyme/isoform in each plant tissue. The protein is Peroxidase 15 of Ipomoea batatas (Sweet potato).